Reading from the N-terminus, the 395-residue chain is uncharacterized protein (395 aa).

Transmembrane regions (helical) follow at residues 12-34 (LLAS…TIYL), 44-66 (LIGY…FGIL), 75-94 (YMLL…TLVN), 99-121 (VVLF…KAWF), 134-156 (FSIN…TLLV), 160-182 (INLP…QIWV), 208-230 (LLWF…SCIS), 245-264 (VVAV…QYSV), 271-293 (ANIR…GFIF), 298-320 (LLLW…PGEY), 341-360 (LGWL…LTSL), and 364-381 (SLFV…VLML).

It belongs to the major facilitator superfamily.

The protein resides in the cell inner membrane. In terms of biological role, a transporter able to export peptides. When overexpressed, allows cells deleted for multiple peptidases (pepA, pepB, pepD and pepN) to grow in the presence of dipeptides Ala-Gln or Gly-Tyr which otherwise inhibit growth. Cells overexpressing this protein have decreased intracellular levels of Ala-Gln dipeptide, and in a system that produces the Ala-Gln dipeptide overproduction of this protein increases export of the dipeptide. This is an uncharacterized protein from Escherichia coli (strain K12).